The sequence spans 117 residues: G antigen 1 (117 aa).

A disordered region spans residues 1-117 (MSWRGRSTYY…PEEGEGQSQC (117 aa)). Acidic residues-rich tracts occupy residues 32–45 (FSDEVEPATPEEGE) and 87–96 (ECEDGPDGQE).

The protein belongs to the GAGE family. As to expression, expressed in a variety of tumor tissues but not in normal tissues, except testis.

Functionally, antigen, recognized on melanoma by autologous cytolytic T-lymphocytes. The sequence is that of G antigen 1 from Homo sapiens (Human).